Consider the following 118-residue polypeptide: Large ribosomal subunit protein bL20 (118 aa).

It belongs to the bacterial ribosomal protein bL20 family.

In terms of biological role, binds directly to 23S ribosomal RNA and is necessary for the in vitro assembly process of the 50S ribosomal subunit. It is not involved in the protein synthesizing functions of that subunit. The protein is Large ribosomal subunit protein bL20 of Acidiphilium cryptum (strain JF-5).